Consider the following 163-residue polypeptide: Ankyrin repeat domain-containing protein 37 (163 aa).

ANK repeat units lie at residues 29–58 (LGQS…DVNQ), 62–91 (FGEA…RIDM), and 95–124 (DGHT…TQDT). The Nuclear localization signal signature appears at 129-149 (QSSLHNLKETAAGVKRGQCCQ).

Its subcellular location is the nucleus. It is found in the cytoplasm. The polypeptide is Ankyrin repeat domain-containing protein 37 (ankrd37) (Xenopus tropicalis (Western clawed frog)).